The sequence spans 568 residues: Glucose-6-phosphate isomerase, cytosolic 1 (568 aa).

Glu360 (proton donor) is an active-site residue. Catalysis depends on residues His391 and Lys516.

The protein belongs to the GPI family. In terms of assembly, homodimer.

The protein localises to the cytoplasm. It catalyses the reaction alpha-D-glucose 6-phosphate = beta-D-fructose 6-phosphate. It functions in the pathway carbohydrate degradation; glycolysis; D-glyceraldehyde 3-phosphate and glycerone phosphate from D-glucose: step 2/4. In Clarkia williamsonii, this protein is Glucose-6-phosphate isomerase, cytosolic 1 (PGIC1).